The following is a 44-amino-acid chain: Photosystem I reaction center subunit IX 2 (44 aa).

Residues 13–35 traverse the membrane as a helical segment; sequence APVLATLWLSSTAVILIGVNSYF.

This sequence belongs to the PsaJ family.

The protein localises to the cellular thylakoid membrane. Its function is as follows. May help in the organization of the PsaE and PsaF subunits. The chain is Photosystem I reaction center subunit IX 2 (psaJ2) from Prochlorococcus marinus (strain NATL2A).